Here is a 302-residue protein sequence, read N- to C-terminus: Taste receptor type 2 member 104 (302 aa).

Residues 1-7 (MLSALES) are Extracellular-facing. The helical transmembrane segment at 8–28 (ILLSVATSEAMLGVLGNTFIV) threads the bilayer. Topologically, residues 29–43 (LVNYTDWVRNKKLSK) are cytoplasmic. Residues 44-64 (INFILTGLAISRIFTIWIITL) traverse the membrane as a helical segment. The Extracellular portion of the chain corresponds to 65–87 (DAYTKVFLLTMLMPSSLHECMSY). A helical membrane pass occupies residues 88-108 (IWVIINHLSVWFSTSLGIFYF). Residues 109–128 (LKIANFSHYIFLWMKRRADK) are Cytoplasmic-facing. A helical membrane pass occupies residues 129 to 149 (VFVFLIVFLIITWLASFPLAV). Residues 150 to 182 (KVIKDVKIYQSNTSWLIHLEKSELLINYVFANM) are Extracellular-facing. N-linked (GlcNAc...) asparagine glycosylation occurs at asparagine 161. A helical membrane pass occupies residues 183-203 (GPISLFIVAIIACFLLTISLW). Residues 204–229 (RHSRQMQSIGSGFRDLNTEAHMKAMK) are Cytoplasmic-facing. A helical membrane pass occupies residues 230–250 (VLIAFIILFILYFLGILIETL). Topologically, residues 251-259 (CLFLTNNKL) are extracellular. Residues 260–280 (LFIFGFTLSAMYPCCHSFILI) traverse the membrane as a helical segment. Residues 281–302 (LTSRELKQATMRALQRLKCCET) lie on the Cytoplasmic side of the membrane.

This sequence belongs to the G-protein coupled receptor T2R family.

It localises to the membrane. Functionally, putative taste receptor which may play a role in the perception of bitterness. In Mus musculus (Mouse), this protein is Taste receptor type 2 member 104.